Here is a 1078-residue protein sequence, read N- to C-terminus: mRNA 3'-end-processing protein rna14 (1078 aa).

2 disordered regions span residues 15–209 (AMNA…DTPA) and 222–251 (QSEN…HDRV). A compositionally biased stretch (polar residues) spans 42 to 55 (KTLQDQYSASILDS). Positions 58-68 (SEIAPSSASPS) are enriched in low complexity. Residues 82-115 (DPSQPADSAYPSQTPSRADSQASVSAPASGTSVP) show a composition bias toward polar residues. The span at 126 to 139 (VEDEDEDDAGDADY) shows a compositional bias: acidic residues. Composition is skewed to polar residues over residues 151–170 (NTIS…NEDT) and 190–206 (FPNS…SKSD). HAT repeat units lie at residues 280–312 (NRID…MESE), 314–345 (NELY…YVRR), 356–391 (QSRR…FIRS), 405–438 (QKMD…FEMG), 475–508 (TTLP…WEKG), and 520–552 (AFKA…FCFL). 2 disordered regions span residues 632–663 (ETFA…ESMK) and 851–950 (PTVV…QGSP). Positions 879–894 (GTPSSRYPDASVTNSP) are enriched in polar residues. The span at 896–907 (RPLEDFDDEMNR) shows a compositional bias: basic and acidic residues. The segment covering 931–949 (RTQQVISNQTGSQFRSQGS) has biased composition (polar residues).

It localises to the nucleus. Its subcellular location is the cytoplasm. In terms of biological role, component of the cleavage factor IA (CFIA) complex, which is involved in the endonucleolytic cleavage during polyadenylation-dependent pre-mRNA 3'-end formation. The polypeptide is mRNA 3'-end-processing protein rna14 (rna14) (Aspergillus oryzae (strain ATCC 42149 / RIB 40) (Yellow koji mold)).